A 160-amino-acid chain; its full sequence is Large ribosomal subunit protein eL21B (160 aa).

A Glycyl lysine isopeptide (Lys-Gly) (interchain with G-Cter in ubiquitin) cross-link involves residue lysine 32.

Belongs to the eukaryotic ribosomal protein eL21 family. Component of the large ribosomal subunit (LSU). Mature yeast ribosomes consist of a small (40S) and a large (60S) subunit. The 40S small subunit contains 1 molecule of ribosomal RNA (18S rRNA) and 33 different proteins (encoded by 57 genes). The large 60S subunit contains 3 rRNA molecules (25S, 5.8S and 5S rRNA) and 46 different proteins (encoded by 81 genes).

It is found in the cytoplasm. Functionally, component of the ribosome, a large ribonucleoprotein complex responsible for the synthesis of proteins in the cell. The small ribosomal subunit (SSU) binds messenger RNAs (mRNAs) and translates the encoded message by selecting cognate aminoacyl-transfer RNA (tRNA) molecules. The large subunit (LSU) contains the ribosomal catalytic site termed the peptidyl transferase center (PTC), which catalyzes the formation of peptide bonds, thereby polymerizing the amino acids delivered by tRNAs into a polypeptide chain. The nascent polypeptides leave the ribosome through a tunnel in the LSU and interact with protein factors that function in enzymatic processing, targeting, and the membrane insertion of nascent chains at the exit of the ribosomal tunnel. This chain is Large ribosomal subunit protein eL21B, found in Saccharomyces cerevisiae (strain ATCC 204508 / S288c) (Baker's yeast).